The following is a 98-amino-acid chain: Toxin ParE1 (98 aa).

The protein belongs to the RelE toxin family.

In terms of biological role, toxic component of a type II toxin-antitoxin (TA) system. Its toxic effect is neutralized by coexpression with cognate antitoxin ParD1. This chain is Toxin ParE1 (parE1), found in Mycobacterium tuberculosis (strain CDC 1551 / Oshkosh).